We begin with the raw amino-acid sequence, 149 residues long: Arginine repressor (149 aa).

Belongs to the ArgR family.

The protein localises to the cytoplasm. It functions in the pathway amino-acid biosynthesis; L-arginine biosynthesis [regulation]. Its function is as follows. Regulates arginine biosynthesis genes. The polypeptide is Arginine repressor (Listeria welshimeri serovar 6b (strain ATCC 35897 / DSM 20650 / CCUG 15529 / CIP 8149 / NCTC 11857 / SLCC 5334 / V8)).